A 154-amino-acid polypeptide reads, in one-letter code: Ribonuclease H (154 aa).

The RNase H type-1 domain occupies 1 to 142 (MLKHIDLYTD…CDELARDAAS (142 aa)). D10, E48, D70, and D134 together coordinate Mg(2+). Basic and acidic residues predominate over residues 126–147 (GHPENERCDELARDAASGKELA). The segment at 126 to 154 (GHPENERCDELARDAASGKELAEDTGYQP) is disordered.

The protein belongs to the RNase H family. In terms of assembly, monomer. Requires Mg(2+) as cofactor.

Its subcellular location is the cytoplasm. The enzyme catalyses Endonucleolytic cleavage to 5'-phosphomonoester.. In terms of biological role, endonuclease that specifically degrades the RNA of RNA-DNA hybrids. This is Ribonuclease H from Aeromonas salmonicida (strain A449).